The following is a 218-amino-acid chain: N-(5'-phosphoribosyl)anthranilate isomerase (218 aa).

Belongs to the TrpF family.

The enzyme catalyses N-(5-phospho-beta-D-ribosyl)anthranilate = 1-(2-carboxyphenylamino)-1-deoxy-D-ribulose 5-phosphate. It functions in the pathway amino-acid biosynthesis; L-tryptophan biosynthesis; L-tryptophan from chorismate: step 3/5. The polypeptide is N-(5'-phosphoribosyl)anthranilate isomerase (Bordetella parapertussis (strain 12822 / ATCC BAA-587 / NCTC 13253)).